A 260-amino-acid polypeptide reads, in one-letter code: ProSAAS (260 aa).

The first 33 residues, 1-33 (MAGSPLLCGPRAGGVGLLVLLLLGLLRLPPTLS), serve as a signal peptide directing secretion. The tract at residues 34–215 (ARPVKEPRSL…SSEPEAAPAP (182 aa)) is proSAAS(1-180). Disordered stretches follow at residues 162-187 (AALRPRPPVYDDGPTGPDVEDAADET) and 206-234 (SSEPEAAPAPRRLRRAVDQDLGPEVPPEN). The segment at 221-260 (AVDQDLGPEVPPENVLGALLRVKRLENSSPQAPARRLLPP) is C-terminal inhibitory domain; interacts with PCSK1. The short motif at 239–244 (LLRVKR) is the Sufficient for inhibition of PCSK1 element.

In terms of assembly, interacts via the C-terminal inhibitory domain with PCSK1 65 kDa form. Proteolytically cleaved in the Golgi. Big SAAS, Little SAAS, PEN and Big LEN are the major processed peptides in proSAAS-overexpressing PC-12 phaeochromocytoma cells (lacking PCSK1 and PCSK2 endopeptidases). Peptides corresponding to PEN and a proSAAS aa 40-59 have been detected in wild-type PC-12 cells. Expressed in adult brain (all major structural regions), adrenal gland (medulla) and spinal cord (dorsal and ventral horn). Expressed in pancreatic islands.

It is found in the secreted. Its subcellular location is the golgi apparatus. The protein localises to the trans-Golgi network. Functionally, may function in the control of the neuroendocrine secretory pathway. Proposed be a specific endogenous inhibitor of PCSK1. ProSAAS and Big PEN-LEN, both containing the C-terminal inhibitory domain, but not the processed peptides reduce PCSK1 activity in the endoplasmic reticulum and Golgi. It reduces the activity of the 87 kDa form but not the autocatalytically derived 65 kDa form of PCSK1. Subsequent processing of proSAAS may eliminate the inhibition. Slows down convertase-mediated processing of proopiomelanocortin and proenkephalin. May control the intracellular timing of PCSK1 rather than its total level of activity. In terms of biological role, endogenous ligand for GPR171. Neuropeptide involved in the regulation of feeding. The sequence is that of ProSAAS (Pcsk1n) from Rattus norvegicus (Rat).